Here is a 605-residue protein sequence, read N- to C-terminus: MRIKKKNTRGNARNFITRSQAVRKLQVSLADFRRLCIFKGIYPREPRNKKKANKGSTAPTTFYYAKDIQYLMHEPVLAKFREHKTFARKLTRALGRGEVSSAKRLEENRDSYTLDHIIKERYPSFPDAIRDIDDALNMLFLFSNLPSTNQVSSKIINDAQKICNQWLAYVAKERLVRKVFVSIKGVYYQANIKGEEVRWLVPFKFPENIPSDVDFRIMLTFLEFYSTLLHFVLYKLYTDSGLIYPPKLDLKKDKIISGLSSYILESRQEDSLLKLDPTEIEEDVKVESLDASTLKSALNADEANTDETEKEEEQEKKQEKEQEKEQNEETELDTFEDNNKNKGDILIQPSKYDSPVASLFSAFVFYVSREVPIDILEFLILSCGGNVISEAAMDQIENKKDIDMSKVTHQIVDRPVLKNKVAGRTYIQPQWIFDCINKGELVPANKYLPGEALPPHLSPWGDAIGYDPTAPVEEGEEEESESESESEDQVEEEDQEVVAGEEDDDDDEELQAQKELELEAQGIKYSETSEADKDVNKSKNKKRKVDEEEEEKKLKMIMMSNKQKKLYKKMKYSNAKKEEQAENLKKKKKQIAKQKAKLNKLDSKK.

The tract at residues 51 to 484 is sufficient for interaction with ERB1; sequence KANKGSTAPT…GEEEESESES (434 aa). At S288 the chain carries Phosphoserine. Residues 294–342 adopt a coiled-coil conformation; it reads LKSALNADEANTDETEKEEEQEKKQEKEQEKEQNEETELDTFEDNNKNK. A disordered region spans residues 297 to 342; sequence ALNADEANTDETEKEEEQEKKQEKEQEKEQNEETELDTFEDNNKNK. Residues 303–312 show a composition bias toward acidic residues; sequence ANTDETEKEE. T308 is subject to Phosphothreonine. Positions 313 to 327 are enriched in basic and acidic residues; the sequence is EQEKKQEKEQEKEQN. Residues 355–449 form the BRCT domain; sequence PVASLFSAFV…ELVPANKYLP (95 aa). The interval 459 to 605 is disordered; sequence PWGDAIGYDP…AKLNKLDSKK (147 aa). A compositionally biased stretch (acidic residues) spans 473–510; sequence EEGEEEESESESESEDQVEEEDQEVVAGEEDDDDDEEL. Residues 530-605 are a coiled coil; sequence EADKDVNKSK…AKLNKLDSKK (76 aa). Residues 562–571 are compositionally biased toward basic residues; sequence KQKKLYKKMK. Over residues 575–584 the composition is skewed to basic and acidic residues; sequence AKKEEQAENL. Over residues 585-598 the composition is skewed to basic residues; it reads KKKKKQIAKQKAKL.

The protein belongs to the pescadillo family. As to quaternary structure, component of the NOP7 complex, composed of ERB1, NOP7 and YTM1. The complex is held together by ERB1, which interacts with NOP7 via its N-terminal domain and with YTM1 via a high-affinity interaction between the seven-bladed beta-propeller domains of the 2 proteins. The NOP7 complex associates with the 66S pre-ribosome.

The protein resides in the nucleus. The protein localises to the nucleolus. It localises to the nucleoplasm. Functionally, component of the NOP7 complex, which is required for maturation of the 25S and 5.8S ribosomal RNAs and formation of the 60S ribosome. This Saccharomyces cerevisiae (strain YJM789) (Baker's yeast) protein is Pescadillo homolog.